Consider the following 402-residue polypeptide: Argininosuccinate synthase (402 aa).

Position 9–17 (9–17 (AYSGGLDTS)) interacts with ATP. Tyr-86 is an L-citrulline binding site. ATP is bound at residue Gly-116. L-aspartate-binding residues include Thr-118, Asn-122, and Asp-123. Position 122 (Asn-122) interacts with L-citrulline. 5 residues coordinate L-citrulline: Arg-126, Ser-174, Ser-183, Glu-259, and Tyr-271.

The protein belongs to the argininosuccinate synthase family. Type 1 subfamily. Homotetramer.

The protein localises to the cytoplasm. It carries out the reaction L-citrulline + L-aspartate + ATP = 2-(N(omega)-L-arginino)succinate + AMP + diphosphate + H(+). Its pathway is amino-acid biosynthesis; L-arginine biosynthesis; L-arginine from L-ornithine and carbamoyl phosphate: step 2/3. The sequence is that of Argininosuccinate synthase from Anoxybacillus flavithermus (strain DSM 21510 / WK1).